A 52-amino-acid chain; its full sequence is Gastrin/cholecystokinin-like peptide (52 aa).

Belongs to the gastrin/cholecystokinin family.

It localises to the secreted. Functionally, may control digestion processes. The polypeptide is Gastrin/cholecystokinin-like peptide (Trachemys scripta (Red-eared slider turtle)).